A 209-amino-acid polypeptide reads, in one-letter code: Potassium-transporting ATPase KdpC subunit (209 aa).

A helical transmembrane segment spans residues 18-38 (ALALFVLLGLGLGYSLVATGI).

The protein belongs to the KdpC family. The system is composed of three essential subunits: KdpA, KdpB and KdpC.

It is found in the cell inner membrane. Part of the high-affinity ATP-driven potassium transport (or Kdp) system, which catalyzes the hydrolysis of ATP coupled with the electrogenic transport of potassium into the cytoplasm. This subunit acts as a catalytic chaperone that increases the ATP-binding affinity of the ATP-hydrolyzing subunit KdpB by the formation of a transient KdpB/KdpC/ATP ternary complex. This chain is Potassium-transporting ATPase KdpC subunit, found in Xanthomonas campestris pv. campestris (strain 8004).